A 99-amino-acid polypeptide reads, in one-letter code: MKLIFDIQLFAHKKAGGSTRNGRDSESKRLGVKRSDGQFVLAGNILVRQRGTKFHPGKNVGRGGDDTLFALVTGYVKFENKRGRKVVSVIPAEEMVAAQ.

Positions 1–10 are excised as a propeptide; sequence MKLIFDIQLF.

The protein belongs to the bacterial ribosomal protein bL27 family. The N-terminus is cleaved by ribosomal processing cysteine protease Prp.

The protein is Large ribosomal subunit protein bL27 of Caldicellulosiruptor saccharolyticus (strain ATCC 43494 / DSM 8903 / Tp8T 6331).